Here is a 1238-residue protein sequence, read N- to C-terminus: ATP-dependent helicase/nuclease subunit A (1238 aa).

One can recognise a UvrD-like helicase ATP-binding domain in the interval 6 to 474 (TKWTETQKSA…IKLSENFRSR (469 aa)). Residue 27–34 (AGAGTGKT) coordinates ATP. A UvrD-like helicase C-terminal domain is found at 512 to 811 (PFEGNCGGDV…RIMSIHKSKG (300 aa)).

This sequence belongs to the helicase family. AddA subfamily. In terms of assembly, heterodimer of AddA and AddB/RexB. The cofactor is Mg(2+).

It carries out the reaction Couples ATP hydrolysis with the unwinding of duplex DNA by translocating in the 3'-5' direction.. The enzyme catalyses ATP + H2O = ADP + phosphate + H(+). Its function is as follows. The heterodimer acts as both an ATP-dependent DNA helicase and an ATP-dependent, dual-direction single-stranded exonuclease. Recognizes the chi site generating a DNA molecule suitable for the initiation of homologous recombination. The AddA nuclease domain is required for chi fragment generation; this subunit has the helicase and 3' -&gt; 5' nuclease activities. This Clostridium kluyveri (strain NBRC 12016) protein is ATP-dependent helicase/nuclease subunit A.